A 118-amino-acid polypeptide reads, in one-letter code: Large ribosomal subunit protein uL22 (118 aa).

It belongs to the universal ribosomal protein uL22 family. As to quaternary structure, part of the 50S ribosomal subunit.

Functionally, this protein binds specifically to 23S rRNA; its binding is stimulated by other ribosomal proteins, e.g. L4, L17, and L20. It is important during the early stages of 50S assembly. It makes multiple contacts with different domains of the 23S rRNA in the assembled 50S subunit and ribosome. The globular domain of the protein is located near the polypeptide exit tunnel on the outside of the subunit, while an extended beta-hairpin is found that lines the wall of the exit tunnel in the center of the 70S ribosome. This Leuconostoc mesenteroides subsp. mesenteroides (strain ATCC 8293 / DSM 20343 / BCRC 11652 / CCM 1803 / JCM 6124 / NCDO 523 / NBRC 100496 / NCIMB 8023 / NCTC 12954 / NRRL B-1118 / 37Y) protein is Large ribosomal subunit protein uL22.